A 319-amino-acid chain; its full sequence is Ribosomal RNA small subunit methyltransferase H (319 aa).

S-adenosyl-L-methionine-binding positions include 34–36, aspartate 54, phenylalanine 83, aspartate 104, and glutamine 111; that span reads GGH.

This sequence belongs to the methyltransferase superfamily. RsmH family.

It is found in the cytoplasm. It catalyses the reaction cytidine(1402) in 16S rRNA + S-adenosyl-L-methionine = N(4)-methylcytidine(1402) in 16S rRNA + S-adenosyl-L-homocysteine + H(+). Functionally, specifically methylates the N4 position of cytidine in position 1402 (C1402) of 16S rRNA. The sequence is that of Ribosomal RNA small subunit methyltransferase H from Lactiplantibacillus plantarum (strain ATCC BAA-793 / NCIMB 8826 / WCFS1) (Lactobacillus plantarum).